We begin with the raw amino-acid sequence, 310 residues long: Retrotransposon Gag-like protein 4 (310 aa).

A CCHC-type zinc finger spans residues 278 to 295 (QLCLYCSQSGHFTRDCLA).

Its function is as follows. Involved in cognitive function in the brain, possibly via the noradrenergic system. In Homo sapiens (Human), this protein is Retrotransposon Gag-like protein 4.